A 72-amino-acid chain; its full sequence is MQRLVLLLAISLLLYQDLPVRSEFELDRICGYGTARCRKKCRSQEYRIGRCPNTYACCLRKWDESLLNRTKP.

An N-terminal signal peptide occupies residues 1 to 22 (MQRLVLLLAISLLLYQDLPVRS). Disulfide bonds link Cys30–Cys57, Cys37–Cys51, and Cys41–Cys58.

The protein belongs to the beta-defensin family. High expression in the testis. Gastric antrum exhibited relatively high levels. A lower expression is observed in uterus and neutrophils thyroid gland, lung, and kidney. No detectable expression in other tissues tested.

Its subcellular location is the secreted. Has antimicrobial activity. Synergistic effects with lysozyme and DEFB103. In Homo sapiens (Human), this protein is Beta-defensin 104 (DEFB104A).